Consider the following 30-residue polypeptide: Bacteriocin SRCAM 37 (30 aa).

This sequence belongs to the bacteriocin class IIA/YGNGV family.

The protein localises to the secreted. In terms of biological role, bacteriocin with antibacterial activity against C.jejuni. This chain is Bacteriocin SRCAM 37, found in Paenibacillus polymyxa (Bacillus polymyxa).